The primary structure comprises 350 residues: Thymidine kinase (350 aa).

17 to 24 is a binding site for ATP; sequence GPFGIGKT. The active-site Proton acceptor is Glu-45. Gln-86 is a binding site for substrate. Arg-176 is an ATP binding site. Arg-182 provides a ligand contact to substrate.

The protein belongs to the herpesviridae thymidine kinase family. Homodimer.

The enzyme catalyses thymidine + ATP = dTMP + ADP + H(+). Its function is as follows. Catalyzes the transfer of the gamma-phospho group of ATP to thymidine to generate dTMP in the salvage pathway of pyrimidine synthesis. The dTMP serves as a substrate for DNA polymerase during viral DNA replication. Allows the virus to be reactivated and to grow in non-proliferative cells lacking a high concentration of phosphorylated nucleic acid precursors. This chain is Thymidine kinase, found in Gallus gallus (Chicken).